A 430-amino-acid polypeptide reads, in one-letter code: Ribosomal protein uS12 methylthiotransferase RimO (430 aa).

An MTTase N-terminal domain is found at 1-116; sequence MKIGIKVLGC…IAEAIEKATP (116 aa). [4Fe-4S] cluster contacts are provided by C10, C46, C79, C146, C150, and C153. The region spanning 132 to 362 is the Radical SAM core domain; it reads SCNNSFAYVK…LIFQSQIAYE (231 aa). Residues 365 to 430 enclose the TRAM domain; sequence KRFVGKNLNV…DEYDLKGELI (66 aa).

This sequence belongs to the methylthiotransferase family. RimO subfamily. The cofactor is [4Fe-4S] cluster.

It is found in the cytoplasm. The enzyme catalyses L-aspartate(89)-[ribosomal protein uS12]-hydrogen + (sulfur carrier)-SH + AH2 + 2 S-adenosyl-L-methionine = 3-methylsulfanyl-L-aspartate(89)-[ribosomal protein uS12]-hydrogen + (sulfur carrier)-H + 5'-deoxyadenosine + L-methionine + A + S-adenosyl-L-homocysteine + 2 H(+). In terms of biological role, catalyzes the methylthiolation of an aspartic acid residue of ribosomal protein uS12. The polypeptide is Ribosomal protein uS12 methylthiotransferase RimO (Pseudothermotoga lettingae (strain ATCC BAA-301 / DSM 14385 / NBRC 107922 / TMO) (Thermotoga lettingae)).